A 330-amino-acid chain; its full sequence is Uroporphyrinogen decarboxylase (330 aa).

Residues 10-14 (RQAGR), F29, S59, D60, Y137, S192, and H307 each bind substrate.

Belongs to the uroporphyrinogen decarboxylase family. As to quaternary structure, homodimer.

The protein resides in the plastid. The protein localises to the chloroplast. The catalysed reaction is uroporphyrinogen III + 4 H(+) = coproporphyrinogen III + 4 CO2. The protein operates within porphyrin-containing compound metabolism; protoporphyrin-IX biosynthesis; coproporphyrinogen-III from 5-aminolevulinate: step 4/4. In terms of biological role, catalyzes the decarboxylation of four acetate groups of uroporphyrinogen-III to yield coproporphyrinogen-III. This is Uroporphyrinogen decarboxylase (DCUP) from Hordeum vulgare (Barley).